Consider the following 67-residue polypeptide: MKGFLFLLLTISLLVMIQIQTGVLGNSTTPRMTTKKVKSATPALSSLGGGSVLLFLANTLIQLFYLS.

An N-terminal signal peptide occupies residues 1–25; that stretch reads MKGFLFLLLTISLLVMIQIQTGVLG. Asn-26 carries an N-linked (GlcNAc...) asparagine glycan. Ser-45 carries GPI-anchor amidated serine lipidation. Residues 46–67 constitute a propeptide, removed in mature form; that stretch reads SLGGGSVLLFLANTLIQLFYLS.

As to expression, epididymis. Highest levels are found in the distal corpus and cauda. Little or no expression in the caput and proximal cauda regions.

Its subcellular location is the cell membrane. Its function is as follows. May play a role in carrying and orienting carbohydrate, as well as having a more specific role. The chain is CAMPATH-1 antigen (CD52) from Canis lupus familiaris (Dog).